The chain runs to 194 residues: Putative manganese efflux pump MntP (194 aa).

A run of 6 helical transmembrane segments spans residues 3 to 23 (PITT…AAIG), 37 to 57 (LYVA…GWLL), 65 to 85 (IATF…IHMI), 112 to 132 (LAAT…SMAF), 137 to 157 (IGIV…FGVM), and 170 to 190 (AEIV…YEHL).

It belongs to the MntP (TC 9.B.29) family.

Its subcellular location is the cell inner membrane. In terms of biological role, probably functions as a manganese efflux pump. The polypeptide is Putative manganese efflux pump MntP (Xylella fastidiosa (strain M23)).